A 389-amino-acid polypeptide reads, in one-letter code: 3-ketoacyl-CoA thiolase (389 aa).

C91 (acyl-thioester intermediate) is an active-site residue. Active-site proton acceptor residues include H343 and C373.

Belongs to the thiolase-like superfamily. Thiolase family. Heterotetramer of two alpha chains (FadB) and two beta chains (FadA).

Its subcellular location is the cytoplasm. It carries out the reaction an acyl-CoA + acetyl-CoA = a 3-oxoacyl-CoA + CoA. The protein operates within lipid metabolism; fatty acid beta-oxidation. Functionally, catalyzes the final step of fatty acid oxidation in which acetyl-CoA is released and the CoA ester of a fatty acid two carbons shorter is formed. In Citrobacter koseri (strain ATCC BAA-895 / CDC 4225-83 / SGSC4696), this protein is 3-ketoacyl-CoA thiolase.